A 292-amino-acid chain; its full sequence is 4-diphosphocytidyl-2-C-methyl-D-erythritol kinase (292 aa).

Residue K20 is part of the active site. An ATP-binding site is contributed by 103-113; it reads PMGGGIGGGSS. D145 is a catalytic residue.

Belongs to the GHMP kinase family. IspE subfamily.

The enzyme catalyses 4-CDP-2-C-methyl-D-erythritol + ATP = 4-CDP-2-C-methyl-D-erythritol 2-phosphate + ADP + H(+). Its pathway is isoprenoid biosynthesis; isopentenyl diphosphate biosynthesis via DXP pathway; isopentenyl diphosphate from 1-deoxy-D-xylulose 5-phosphate: step 3/6. In terms of biological role, catalyzes the phosphorylation of the position 2 hydroxy group of 4-diphosphocytidyl-2C-methyl-D-erythritol. In Cupriavidus taiwanensis (strain DSM 17343 / BCRC 17206 / CCUG 44338 / CIP 107171 / LMG 19424 / R1) (Ralstonia taiwanensis (strain LMG 19424)), this protein is 4-diphosphocytidyl-2-C-methyl-D-erythritol kinase.